A 1463-amino-acid chain; its full sequence is Kinesin-like protein KIF15 (1463 aa).

A Kinesin motor domain is found at 18–354 (AIKVFVRVRP…LKFARRAKMI (337 aa)). 99–106 (GQTGSGKT) provides a ligand contact to ATP. The interval 387–424 (AEGSIPRGPSESGDSQMSNSSTESNGPVSGQQSGSSSS) is disordered. The segment covering 398 to 414 (SGDSQMSNSSTESNGPV) has biased composition (polar residues). The span at 415 to 424 (SGQQSGSSSS) shows a compositional bias: low complexity. Coiled-coil stretches lie at residues 436-517 (SLRD…LEHN) and 586-646 (TSTL…QGMK). Disordered regions lie at residues 686–720 (AGEE…SGDI), 1335–1356 (FKEK…SKLT), and 1409–1444 (QLGK…EAGA). Residues 701–715 (DNGSPLRSHSTNSLP) show a composition bias toward polar residues. Residues 1418–1428 (EQMKRDYEALQ) are compositionally biased toward basic and acidic residues.

The protein belongs to the TRAFAC class myosin-kinesin ATPase superfamily. Kinesin family. KLP2 subfamily. As to quaternary structure, homodimer.

The protein localises to the cytoplasm. It is found in the cytoskeleton. Its subcellular location is the spindle. Functionally, plus-end directed kinesin-like motor enzyme involved in mitotic spindle assembly. Plays a role in positioning spindle poles during mitosis, specifically at prometaphase. This is Kinesin-like protein KIF15 (KIF15) from Strongylocentrotus purpuratus (Purple sea urchin).